We begin with the raw amino-acid sequence, 253 residues long: 2-C-methyl-D-erythritol 4-phosphate cytidylyltransferase (253 aa).

It belongs to the IspD/TarI cytidylyltransferase family. IspD subfamily.

It catalyses the reaction 2-C-methyl-D-erythritol 4-phosphate + CTP + H(+) = 4-CDP-2-C-methyl-D-erythritol + diphosphate. The protein operates within isoprenoid biosynthesis; isopentenyl diphosphate biosynthesis via DXP pathway; isopentenyl diphosphate from 1-deoxy-D-xylulose 5-phosphate: step 2/6. Its function is as follows. Catalyzes the formation of 4-diphosphocytidyl-2-C-methyl-D-erythritol from CTP and 2-C-methyl-D-erythritol 4-phosphate (MEP). The protein is 2-C-methyl-D-erythritol 4-phosphate cytidylyltransferase of Chlorobium chlorochromatii (strain CaD3).